The following is a 121-amino-acid chain: MARIKRGTATHARHKKVLKLAKGYRGRAKNCYRIALQRVEKALQYAYRDRRNRKRDFRGLWIIRINAAAREHGLTYGRFMHGLKLVGVDLNRKILAEMAVNHKDDFAKLIETVSSKLAENS.

It belongs to the bacterial ribosomal protein bL20 family.

Its function is as follows. Binds directly to 23S ribosomal RNA and is necessary for the in vitro assembly process of the 50S ribosomal subunit. It is not involved in the protein synthesizing functions of that subunit. In Wolbachia pipientis subsp. Culex pipiens (strain wPip), this protein is Large ribosomal subunit protein bL20.